Here is a 329-residue protein sequence, read N- to C-terminus: Ribosomal protein L11 methyltransferase (329 aa).

Residues Thr177, Gly198, Asp220, and Asn264 each contribute to the S-adenosyl-L-methionine site.

It belongs to the methyltransferase superfamily. PrmA family.

It is found in the cytoplasm. The catalysed reaction is L-lysyl-[protein] + 3 S-adenosyl-L-methionine = N(6),N(6),N(6)-trimethyl-L-lysyl-[protein] + 3 S-adenosyl-L-homocysteine + 3 H(+). In terms of biological role, methylates ribosomal protein L11. This is Ribosomal protein L11 methyltransferase from Helicobacter acinonychis (strain Sheeba).